The primary structure comprises 524 residues: Thermosome subunit 3 (524 aa).

Belongs to the TCP-1 chaperonin family. In terms of assembly, the thermosome or CCT complex is a oligomeric complex of two octameric double-ring structures; the complex is probably a heterooligomer of CCT1, CCT2 and CCT3 with yet unknown stoichiometry.

Its function is as follows. Molecular chaperone that assists in the folding or refolding of nascent or denatured proteins along with ATP hydrolysis. ATPase activity is highest in thermosome assemblies containing CCT1:CCT2, followed by assemblies containing CCT1:CCT2:CCT3. Not required for thermosome ATPase activity. Not required for growth. The chain is Thermosome subunit 3 (cct3) from Haloferax volcanii (strain ATCC 29605 / DSM 3757 / JCM 8879 / NBRC 14742 / NCIMB 2012 / VKM B-1768 / DS2) (Halobacterium volcanii).